We begin with the raw amino-acid sequence, 314 residues long: Torsin-2A (314 aa).

Residues 1–19 form the signal peptide; it reads MAVRWWIIPMLLLVPGSSG. An ATP-binding site is contributed by 86 to 93; that stretch reads GWSGTGKT. Residues Asn-142 and Asn-283 are each glycosylated (N-linked (GlcNAc...) asparagine).

It belongs to the ClpA/ClpB family. Torsin subfamily. Homohexamer.

The protein localises to the endoplasmic reticulum lumen. The sequence is that of Torsin-2A (tor2a) from Xenopus laevis (African clawed frog).